A 232-amino-acid polypeptide reads, in one-letter code: Heptaprenylglyceryl phosphate synthase (232 aa).

K12 lines the sn-glycerol 1-phosphate pocket. Positions 14 and 40 each coordinate Mg(2+). Residues 159 to 164 (YLEYSG), G189, and 209 to 210 (GN) contribute to the sn-glycerol 1-phosphate site.

It belongs to the GGGP/HepGP synthase family. Group I subfamily. Homodimer. Requires Mg(2+) as cofactor.

The catalysed reaction is sn-glycerol 1-phosphate + all-trans-heptaprenyl diphosphate = 3-heptaprenyl-sn-glycero-1-phosphate + diphosphate. It functions in the pathway membrane lipid metabolism; glycerophospholipid metabolism. In terms of biological role, prenyltransferase that catalyzes in vivo the transfer of the heptaprenyl moiety of heptaprenyl pyrophosphate (HepPP; 35 carbon atoms) to the C3 hydroxyl of sn-glycerol-1-phosphate (G1P), producing heptaprenylglyceryl phosphate (HepGP). This reaction is an ether-bond-formation step in the biosynthesis of archaea-type G1P-based membrane lipids found in Bacillales. The sequence is that of Heptaprenylglyceryl phosphate synthase from Shouchella clausii (strain KSM-K16) (Alkalihalobacillus clausii).